The chain runs to 655 residues: Ankyrin repeat and SAM domain-containing protein 3 (655 aa).

The tract at residues 1 to 421 (MSELSDEASE…PGSEPQTEKS (421 aa)) is interaction with NEK7. Residues Ser2 and Ser5 each carry the phosphoserine modification. ANK repeat units lie at residues 34–64 (DVPL…DLNK), 68–97 (GGWT…SVNV), 101–130 (EGQT…ELEM), 134–163 (HGWT…NANV), 168–197 (YGYT…KVDT), and 201–220 (SGAT…IVAL). Asn96 carries the 3-hydroxyasparagine modification. A phosphoserine mark is found at Ser201, Ser225, Ser243, Ser244, and Ser245. The segment at 314–426 (YRDVTSPINE…QTEKSPYSGP (113 aa)) is disordered. At Thr318 the chain carries Phosphothreonine. Phosphoserine is present on residues Ser319, Ser366, Ser369, and Ser373. The span at 378–395 (KSSVRKQTRSYLKNKSRH) shows a compositional bias: basic residues. The SAM domain occupies 424–487 (SGPQDLATLL…TSAIARWHSS (64 aa)). The stretch at 500-575 (ADRLETEMQE…AALVLDQLRA (76 aa)) forms a coiled coil. Ser540 bears the Phosphoserine mark.

In terms of assembly, homooligomer. Interacts (via SAM domain) with ANKS6 (via SAM domain). Interacts with BICC1. Interacts with NPHP1. Interacts with NEK8. Interacts with HIF1AN. Interacts with NEK7; this interaction alters the subcellular distribution of NEK7 by preventing its nuclear translocation. Hydroxylated at Asn-96, most probably by HIF1AN. Post-translationally, phosphorylations at Ser-5, Ser-225, Thr-318, Ser-319, Ser-366 and Ser-369 occur in a NEK7-dependent manner. In terms of processing, polyubiquitinated. Kidney (at protein level).

It is found in the cell projection. It localises to the cilium. The protein resides in the cytoplasm. Its function is as follows. May be involved in vasopressin signaling in the kidney. This is Ankyrin repeat and SAM domain-containing protein 3 (Anks3) from Mus musculus (Mouse).